Consider the following 130-residue polypeptide: Small ribosomal subunit protein uS8 (130 aa).

It belongs to the universal ribosomal protein uS8 family. Part of the 30S ribosomal subunit. Contacts proteins S5 and S12.

In terms of biological role, one of the primary rRNA binding proteins, it binds directly to 16S rRNA central domain where it helps coordinate assembly of the platform of the 30S subunit. In Vibrio cholerae serotype O1 (strain ATCC 39541 / Classical Ogawa 395 / O395), this protein is Small ribosomal subunit protein uS8.